Here is a 188-residue protein sequence, read N- to C-terminus: GTP cyclohydrolase 1 (188 aa).

3 residues coordinate Zn(2+): Cys-78, His-81, and Cys-150.

This sequence belongs to the GTP cyclohydrolase I family. In terms of assembly, homomer.

It catalyses the reaction GTP + H2O = 7,8-dihydroneopterin 3'-triphosphate + formate + H(+). Its pathway is cofactor biosynthesis; 7,8-dihydroneopterin triphosphate biosynthesis; 7,8-dihydroneopterin triphosphate from GTP: step 1/1. In Geobacillus sp. (strain WCH70), this protein is GTP cyclohydrolase 1.